Here is a 192-residue protein sequence, read N- to C-terminus: ER protein translocation subcomplex subunit sec67 (192 aa).

In terms of assembly, component of the heterotetrameric Sec62/63complex composed of sec62, sec63, sec66 and sec72. The Sec62/63 complex associates with the Sec61 complex to form the Sec complex.

It is found in the cytoplasm. The protein localises to the nucleus. In terms of biological role, acts as a non-essential component of the Sec62/63 complex which is involved in SRP-independent post-translational translocation across the endoplasmic reticulum (ER) and functions together with the Sec61 complex and bip1 in a channel-forming translocon complex. A cycle of assembly and disassembly of Sec62/63 complex from sec61 may govern the activity of the translocon. sec72 may be involved in signal peptide recognition for a defined subset of leader peptides, or may increase the efficiency of unusual or 'difficult' secretory precursors to the translocation pore, it may be that this protein binds charged leader peptides to the membrane until they engage the translocation apparatus. This chain is ER protein translocation subcomplex subunit sec67 (sec67), found in Schizosaccharomyces pombe (strain 972 / ATCC 24843) (Fission yeast).